The following is a 128-amino-acid chain: Keratin-associated protein 21-1 (128 aa).

Positions Gly-11–Cys-117 are 51 X 2 AA repeats of G-[YCGS].

The protein belongs to the KRTAP type 21 family. As to quaternary structure, interacts with hair keratins. As to expression, strong expression in narrowly defined pattern restricted to the lower and middle cortical regions of the hair shaft in both developing and cycling hair. During hair follicle regression (catagen), expression levels decrease until expression is no longer detectable in follicles at resting stage (telogen).

In the hair cortex, hair keratin intermediate filaments are embedded in an interfilamentous matrix, consisting of hair keratin-associated proteins (KRTAP), which are essential for the formation of a rigid and resistant hair shaft through their extensive disulfide bond cross-linking with abundant cysteine residues of hair keratins. The matrix proteins include the high-sulfur and high-glycine-tyrosine keratins. This Mus musculus (Mouse) protein is Keratin-associated protein 21-1 (Krtap21-1).